Here is a 420-residue protein sequence, read N- to C-terminus: L-rhamnose isomerase (420 aa).

His-262, Asp-294, and Asp-296 together coordinate Mn(2+).

It belongs to the rhamnose isomerase family. As to quaternary structure, homotetramer. Mn(2+) is required as a cofactor.

It localises to the cytoplasm. It carries out the reaction L-rhamnopyranose = L-rhamnulose. Its pathway is carbohydrate degradation; L-rhamnose degradation; glycerone phosphate from L-rhamnose: step 1/3. Its function is as follows. Catalyzes the interconversion of L-rhamnose and L-rhamnulose. The polypeptide is L-rhamnose isomerase (Pectobacterium atrosepticum (strain SCRI 1043 / ATCC BAA-672) (Erwinia carotovora subsp. atroseptica)).